A 123-amino-acid polypeptide reads, in one-letter code: Diacylglycerol kinase (123 aa).

A helical transmembrane segment spans residues 15-32 (ILNATGYSLAGFLAAFRG). Glutamate 33 provides a ligand contact to a divalent metal cation. 3 consecutive transmembrane segments (helical) span residues 35–55 (AFRQ…LLDV), 61–81 (ALMI…SAIE), and 102–122 (GSAA…TILL). Residue glutamate 74 is the Proton acceptor of the active site. Glutamate 81 provides a ligand contact to a divalent metal cation.

This sequence belongs to the bacterial diacylglycerol kinase family. Requires Mg(2+) as cofactor.

It is found in the cell inner membrane. It carries out the reaction a 1,2-diacyl-sn-glycerol + ATP = a 1,2-diacyl-sn-glycero-3-phosphate + ADP + H(+). In terms of biological role, catalyzes the ATP-dependent phosphorylation of sn-l,2-diacylglycerol (DAG) to phosphatidic acid. Involved in the recycling of diacylglycerol produced as a by-product during membrane-derived oligosaccharide (MDO) biosynthesis. The polypeptide is Diacylglycerol kinase (dgkA) (Pseudomonas aeruginosa (strain ATCC 15692 / DSM 22644 / CIP 104116 / JCM 14847 / LMG 12228 / 1C / PRS 101 / PAO1)).